Reading from the N-terminus, the 1384-residue chain is Contactin-associated protein 1 (1384 aa).

An N-terminal signal peptide occupies residues 1–19; that stretch reads MMHLRLFCILLAAVSGAEG. The Extracellular segment spans residues 20-1283; sequence WGYYGCDEEL…PYYHDEGWVA (1264 aa). An F5/8 type C domain is found at 25–168; sequence CDEELVGPLY…IGLRLGLYGC (144 aa). An intrachain disulfide couples Cys25 to Cys168. 3 N-linked (GlcNAc...) asparagine glycosylation sites follow: Asn120, Asn128, and Asn276. Laminin G-like domains are found at residues 203 to 355 and 389 to 538; these read FKTE…AFRC and FRTW…FDTC. Cysteines 323 and 355 form a disulfide. N-linked (GlcNAc...) asparagine glycosylation is found at Asn420, Asn499, and Asn518. 4 cysteine pairs are disulfide-bonded: Cys506–Cys538, Cys544–Cys555, Cys549–Cys564, and Cys566–Cys576. An EGF-like 1 domain is found at 540–577; it reads ITDRCSPNMCEHDGRCYQSWDDFICYCELTGYKGETCH. Residues 576 to 795 form the Fibrinogen C-terminal domain; the sequence is CHTPLYKESC…NTISFHTGAA (220 aa). N-linked (GlcNAc...) asparagine glycans are attached at residues Asn597, Asn653, Asn664, Asn763, Asn804, Asn843, Asn860, Asn948, and Asn956. One can recognise a Laminin G-like 3 domain in the interval 813 to 956; the sequence is FRTSAPSGVF…ANASEGTSPN (144 aa). 4 disulfides stabilise this stretch: Cys930–Cys957, Cys961–Cys974, Cys968–Cys983, and Cys985–Cys995. Positions 957–996 constitute an EGF-like 2 domain; it reads CTGHCAHPRLPCFHGGRCVERYSYYTCDCDLTAFDGPYCN. Asn1078 and Asn1147 each carry an N-linked (GlcNAc...) asparagine glycan. A Laminin G-like 4 domain is found at 1088 to 1250; that stretch reads FSTSSAPAVL…VQGELSESNC (163 aa). A disulfide bridge links Cys1209 with Cys1250. The helical transmembrane segment at 1284 to 1304 threads the bilayer; it reads ILLGFLVAFLLLGLVGMLVLF. Residues 1305–1384 are Cytoplasmic-facing; it reads YLQNHRYKGS…PQILEESRSE (80 aa). Basic and acidic residues predominate over residues 1319–1328; it reads EPKAAHEYHP. The disordered stretch occupies residues 1319-1384; the sequence is EPKAAHEYHP…PQILEESRSE (66 aa). The short motif at 1328–1369 is the SH3-binding element; sequence PGSKPPLPTSGPAQVPTPTAAPNQAPASAPAPAPTPAPAPGP. The segment covering 1339 to 1355 has biased composition (low complexity); that stretch reads PAQVPTPTAAPNQAPAS. Positions 1356-1368 are enriched in pro residues; sequence APAPAPTPAPAPG. The residue at position 1383 (Ser1383) is a Phosphoserine.

This sequence belongs to the neurexin family. As to quaternary structure, interacts with CNTN1/contactin in cis form. As to expression, predominantly expressed in brain. Weak expression detected in ovary, pancreas, colon, lung, heart, intestine and testis.

It is found in the membrane. It localises to the cell junction. The protein resides in the paranodal septate junction. Its function is as follows. Required, with CNTNAP2, for radial and longitudinal organization of myelinated axons. Plays a role in the formation of functional distinct domains critical for saltatory conduction of nerve impulses in myelinated nerve fibers. Demarcates the paranodal region of the axo-glial junction. In association with contactin involved in the signaling between axons and myelinating glial cells. The protein is Contactin-associated protein 1 (CNTNAP1) of Homo sapiens (Human).